The primary structure comprises 488 residues: Bifunctional pantoate ligase/cytidylate kinase (488 aa).

Residue 1–8 (MGALHRAH) coordinates ATP. The interval 1–251 (MGALHRAHGQ…CGETRLIDHT (251 aa)) is pantoate--beta-alanine ligase. The active-site Proton donor is His-8. Position 36 (Gln-36) interacts with (R)-pantoate. Residue Gln-36 coordinates beta-alanine. ATP is bound at residue 125-128 (GEKD). A (R)-pantoate-binding site is contributed by Gln-131. ATP is bound by residues Val-154 and 162–165 (CSSR). The segment at 252-488 (FLMSRQPIVA…PEEVWPTPGS (237 aa)) is cytidylate kinase.

This sequence in the N-terminal section; belongs to the pantothenate synthetase family. In the C-terminal section; belongs to the cytidylate kinase family. Type 1 subfamily.

The protein resides in the cytoplasm. The catalysed reaction is (R)-pantoate + beta-alanine + ATP = (R)-pantothenate + AMP + diphosphate + H(+). It catalyses the reaction CMP + ATP = CDP + ADP. It carries out the reaction dCMP + ATP = dCDP + ADP. It participates in cofactor biosynthesis; (R)-pantothenate biosynthesis; (R)-pantothenate from (R)-pantoate and beta-alanine: step 1/1. Catalyzes the condensation of pantoate with beta-alanine in an ATP-dependent reaction via a pantoyl-adenylate intermediate. In terms of biological role, catalyzes the transfer of a phosphate group from ATP to either CMP or dCMP to form CDP or dCDP and ADP, respectively. The chain is Bifunctional pantoate ligase/cytidylate kinase from Prochlorococcus marinus (strain MIT 9303).